Consider the following 1055-residue polypeptide: Cell-division control histidine kinase PdhS (1055 aa).

Positions 1–626 (MSGSYPFIDI…RANGSEEPVD (626 aa)) are important for polar localization. Residues 419–439 (DDSPVATLPKPPLDIAPTPGR) are disordered. The tract at residues 627–1055 (AHLNAISWRE…AFPPTRVLAD (429 aa)) is interaction with DivK. Residues 679–750 (HVEELKTILD…YLHGLSGNGV (72 aa)) enclose the PAS domain. The region spanning 822-1051 (RISHEIRTPL…VVEIAFPPTR (230 aa)) is the Histidine kinase domain. Histidine 825 carries the phosphohistidine; by autocatalysis modification.

Interacts with DivK.

The protein localises to the cytoplasm. The enzyme catalyses ATP + protein L-histidine = ADP + protein N-phospho-L-histidine.. In terms of biological role, functions as a polar differentiation marker. Essential protein that, by localizing in the old pole of dividing cells, controls cell division and maturation, probably through control of DivK phosphorylation status and cellular distribution, which in turn regulates CtrA, a transcriptional regulator of the minB operon. The asymmetrical localization of this protein is probably required for cells to enter a new division cycle. The chain is Cell-division control histidine kinase PdhS (pdhS) from Brucella anthropi (strain ATCC 49188 / DSM 6882 / CCUG 24695 / JCM 21032 / LMG 3331 / NBRC 15819 / NCTC 12168 / Alc 37) (Ochrobactrum anthropi).